A 100-amino-acid chain; its full sequence is Large ribosomal subunit protein uL23 (100 aa).

It belongs to the universal ribosomal protein uL23 family. In terms of assembly, part of the 50S ribosomal subunit. Contacts protein L29, and trigger factor when it is bound to the ribosome.

Functionally, one of the early assembly proteins it binds 23S rRNA. One of the proteins that surrounds the polypeptide exit tunnel on the outside of the ribosome. Forms the main docking site for trigger factor binding to the ribosome. This chain is Large ribosomal subunit protein uL23, found in Prochlorococcus marinus (strain MIT 9515).